The chain runs to 253 residues: N-acetylmuramoyl-L-alanine amidase CwlM (253 aa).

Residues 4–172 (IFIDPGHGGS…IARGHANGLA (169 aa)) enclose the MurNAc-LAA domain. Positions 179 to 253 (KNAAALYKVQ…AEFDTFIYQE (75 aa)) constitute an SPOR domain. 2 repeat units span residues 184-219 (LYKV…YRDS) and 220-253 (LYKV…IYQE). The tract at residues 184–253 (LYKVQIAAFR…AEFDTFIYQE (70 aa)) is 2 X 35 AA approximate tandem repeats.

It belongs to the N-acetylmuramoyl-L-alanine amidase 3 family.

It is found in the secreted. It catalyses the reaction Hydrolyzes the link between N-acetylmuramoyl residues and L-amino acid residues in certain cell-wall glycopeptides.. Its function is as follows. Hydrolyzes the cell wall of M.luteus more efficiently than that of B.licheniformis and B.subtilis. The C-terminal region, including the repeats, determines substrate specificity. The polypeptide is N-acetylmuramoyl-L-alanine amidase CwlM (cwlM) (Bacillus licheniformis).